The following is a 287-amino-acid chain: Festuclavine synthase II (287 aa).

This sequence belongs to the fgaFS/easG family.

It catalyses the reaction festuclavine + NAD(+) = 6,8-dimethyl-6,7-didehydroergoline + NADH + H(+). It functions in the pathway alkaloid biosynthesis; ergot alkaloid biosynthesis. In terms of biological role, festuclavine synthase; part of the gene cluster that mediates the biosynthesis of isofumigaclavines, fungal ergot alkaloids. The tryptophan dimethylallyltransferase ifgA catalyzes the first step of ergot alkaloid biosynthesis by condensing dimethylallyl diphosphate (DMAP) and tryptophan to form 4-dimethylallyl-L-tryptophan. The second step is catalyzed by the methyltransferase ifgB that methylates 4-dimethylallyl-L-tryptophan in the presence of S-adenosyl-L-methionine, resulting in the formation of N-methyl-dimethylallyl-L-tryptophan. The catalase ifgD and the FAD-dependent oxidoreductase ifgC then transform N-methyl-dimethylallyl-L-tryptophan to chanoclavine-I which is further oxidized by ifgE in the presence of NAD(+), resulting in the formation of chanoclavine-I aldehyde. The chanoclavine-I aldehyde reductases ifgG and/or fgaOx3 reduce chanoclavine-I aldehyde to dihydrochanoclavine-I aldehyde that spontaneously dehydrates to form 6,8-dimethyl-6,7-didehydroergoline. The festuclavine dehydrogenases ifgF1 and/or ifgF2 then catalyze the reduction of 6,8-dimethyl-6,7-didehydroergoline to form festuclavine. Hydrolysis of festuclavine by a yet undetermined cytochrome P450 monooxygenase (called ifgH) then leads to the formation of isofumigaclavine B which is in turn acetylated by ifgI to isofumigaclavine A. Penicillium roqueforti has interestingly at least two sets of genes for the consumption of chanoclavine-I aldehyde on three different loci, the OYEs ifgG/fgaOx3 and the festuclavine synthase homologs ifgF1/ifgF2. The reason for the duplication of these genes is unclear, probably to ensure the conversion of chanoclavine-I aldehyde by differential gene expression under various environmental conditions. The chain is Festuclavine synthase II from Penicillium roqueforti (strain FM164).